The primary structure comprises 461 residues: ATP synthase subunit beta 2 (461 aa).

151-158 (GGAGVGKT) contributes to the ATP binding site.

This sequence belongs to the ATPase alpha/beta chains family. F-type ATPases have 2 components, CF(1) - the catalytic core - and CF(0) - the membrane proton channel. CF(1) has five subunits: alpha(3), beta(3), gamma(1), delta(1), epsilon(1). CF(0) has three main subunits: a(1), b(2) and c(9-12). The alpha and beta chains form an alternating ring which encloses part of the gamma chain. CF(1) is attached to CF(0) by a central stalk formed by the gamma and epsilon chains, while a peripheral stalk is formed by the delta and b chains.

It localises to the cell inner membrane. It catalyses the reaction ATP + H2O + 4 H(+)(in) = ADP + phosphate + 5 H(+)(out). Functionally, produces ATP from ADP in the presence of a proton gradient across the membrane. The catalytic sites are hosted primarily by the beta subunits. The sequence is that of ATP synthase subunit beta 2 from Pseudoalteromonas atlantica (strain T6c / ATCC BAA-1087).